The sequence spans 69 residues: Putative membrane protein insertion efficiency factor (69 aa).

It belongs to the UPF0161 family.

It is found in the cell membrane. Functionally, could be involved in insertion of integral membrane proteins into the membrane. The polypeptide is Putative membrane protein insertion efficiency factor (Clostridium botulinum (strain Kyoto / Type A2)).